The primary structure comprises 38 residues: Potassium channel toxin alpha-KTx 3.2 (38 aa).

Cystine bridges form between Cys8/Cys28, Cys14/Cys33, and Cys18/Cys35.

It belongs to the short scorpion toxin superfamily. Potassium channel inhibitor family. Alpha-KTx 03 subfamily. Expressed by the venom gland.

The protein localises to the secreted. Potent inhibitor of the Shaker potassium channels and its mammalian homologs (Kv1.1/KCNA1, Kv1.3/KCNA3, Kv1.6/KCNA6) (Ki&lt;1 nM for all channels). Also blocks Kv1.2/KCNA2 (IC(50)=26.8 nM). It also shows a weak interaction with nicotinic acetylcholine receptors (nAChR), suggesting it may weakly inhibit it. The sequence is that of Potassium channel toxin alpha-KTx 3.2 from Leiurus hebraeus (Hebrew deathstalker scorpion).